Consider the following 126-residue polypeptide: Holo-[acyl-carrier-protein] synthase (126 aa).

Residues Asp-9 and Glu-58 each coordinate Mg(2+).

The protein belongs to the P-Pant transferase superfamily. AcpS family. It depends on Mg(2+) as a cofactor.

It localises to the cytoplasm. The catalysed reaction is apo-[ACP] + CoA = holo-[ACP] + adenosine 3',5'-bisphosphate + H(+). In terms of biological role, transfers the 4'-phosphopantetheine moiety from coenzyme A to a Ser of acyl-carrier-protein. The chain is Holo-[acyl-carrier-protein] synthase from Vibrio vulnificus (strain YJ016).